The chain runs to 158 residues: 6,7-dimethyl-8-ribityllumazine synthase (158 aa).

5-amino-6-(D-ribitylamino)uracil is bound by residues phenylalanine 22, 57 to 59, and 81 to 83; these read AYE and AVI. (2S)-2-hydroxy-3-oxobutyl phosphate is bound at residue 86-87; sequence GT. Histidine 89 functions as the Proton donor in the catalytic mechanism. Residue phenylalanine 114 coordinates 5-amino-6-(D-ribitylamino)uracil. Arginine 128 serves as a coordination point for (2S)-2-hydroxy-3-oxobutyl phosphate.

The protein belongs to the DMRL synthase family. Forms an icosahedral capsid composed of 60 subunits, arranged as a dodecamer of pentamers.

It carries out the reaction (2S)-2-hydroxy-3-oxobutyl phosphate + 5-amino-6-(D-ribitylamino)uracil = 6,7-dimethyl-8-(1-D-ribityl)lumazine + phosphate + 2 H2O + H(+). It participates in cofactor biosynthesis; riboflavin biosynthesis; riboflavin from 2-hydroxy-3-oxobutyl phosphate and 5-amino-6-(D-ribitylamino)uracil: step 1/2. Catalyzes the formation of 6,7-dimethyl-8-ribityllumazine by condensation of 5-amino-6-(D-ribitylamino)uracil with 3,4-dihydroxy-2-butanone 4-phosphate. This is the penultimate step in the biosynthesis of riboflavin. In Pseudoalteromonas atlantica (strain T6c / ATCC BAA-1087), this protein is 6,7-dimethyl-8-ribityllumazine synthase.